Consider the following 232-residue polypeptide: Dof zinc finger protein DOF4.3 (232 aa).

A Dof-type zinc finger spans residues 25–79 (RVCARCDSDNTKFCYYNNYSEFQPRYFCKNCRRYWTHGGALRNVPIGGSSRAKRT). Zn(2+) is bound by residues C27, C30, C52, and C55.

It localises to the nucleus. Its function is as follows. Transcription factor that binds specifically to a 5'-AA[AG]G-3' consensus core sequence. In Arabidopsis thaliana (Mouse-ear cress), this protein is Dof zinc finger protein DOF4.3 (DOF4.3).